A 314-amino-acid chain; its full sequence is Putative glycosyltransferase ORF31 (314 aa).

Belongs to the glycosyltransferase group 1 family.

This is Putative glycosyltransferase ORF31 from Haloarcula hispanica (His1V).